Reading from the N-terminus, the 33-residue chain is Photosystem II reaction center protein Psb30 (33 aa).

The helical transmembrane segment at Leu5 to Leu25 threads the bilayer.

This sequence belongs to the Psb30/Ycf12 family. In terms of assembly, PSII is composed of 1 copy each of membrane proteins PsbA, PsbB, PsbC, PsbD, PsbE, PsbF, PsbH, PsbI, PsbJ, PsbK, PsbL, PsbM, PsbT, PsbY, PsbZ, Psb30/Ycf12, peripheral proteins of the oxygen-evolving complex and a large number of cofactors. It forms dimeric complexes.

It localises to the plastid. The protein resides in the chloroplast thylakoid membrane. Its function is as follows. A core subunit of photosystem II (PSII), probably helps stabilize the reaction center. The sequence is that of Photosystem II reaction center protein Psb30 from Euglena mutabilis.